Consider the following 208-residue polypeptide: Holliday junction branch migration complex subunit RuvA (208 aa).

The domain I stretch occupies residues 1 to 64 (MIGKLKGIVD…EDMIRLYGFR (64 aa)). The domain II stretch occupies residues 65–143 (VDAEREWFRL…AFAPIDPALI (79 aa)). The tract at residues 144–152 (ALTGAVEDR) is flexible linker. The domain III stretch occupies residues 153–208 (TAPQPVADAISALVNLGYAQIQASAAIAAALKGLGEEAGTVEAKTLIRLGLRELAR).

This sequence belongs to the RuvA family. As to quaternary structure, homotetramer. Forms an RuvA(8)-RuvB(12)-Holliday junction (HJ) complex. HJ DNA is sandwiched between 2 RuvA tetramers; dsDNA enters through RuvA and exits via RuvB. An RuvB hexamer assembles on each DNA strand where it exits the tetramer. Each RuvB hexamer is contacted by two RuvA subunits (via domain III) on 2 adjacent RuvB subunits; this complex drives branch migration. In the full resolvosome a probable DNA-RuvA(4)-RuvB(12)-RuvC(2) complex forms which resolves the HJ.

The protein resides in the cytoplasm. The RuvA-RuvB-RuvC complex processes Holliday junction (HJ) DNA during genetic recombination and DNA repair, while the RuvA-RuvB complex plays an important role in the rescue of blocked DNA replication forks via replication fork reversal (RFR). RuvA specifically binds to HJ cruciform DNA, conferring on it an open structure. The RuvB hexamer acts as an ATP-dependent pump, pulling dsDNA into and through the RuvAB complex. HJ branch migration allows RuvC to scan DNA until it finds its consensus sequence, where it cleaves and resolves the cruciform DNA. The chain is Holliday junction branch migration complex subunit RuvA from Methylorubrum extorquens (strain CM4 / NCIMB 13688) (Methylobacterium extorquens).